We begin with the raw amino-acid sequence, 336 residues long: Structure-specific endonuclease subunit SLX1 (336 aa).

Positions 21 to 104 (SFYGVYLLQS…QHCHETRHIK (84 aa)) constitute a GIY-YIG domain. The disordered stretch occupies residues 37-57 (FYIGSTPDPPRRLRQHNGDLK). The SLX1-type zinc-finger motif lies at 214-290 (CALCLEPIEQ…PATVNRCCSC (77 aa)).

The protein belongs to the SLX1 family. In terms of assembly, forms a heterodimer with SLX4. A divalent metal cation serves as cofactor.

It is found in the nucleus. Functionally, catalytic subunit of the SLX1-SLX4 structure-specific endonuclease that resolves DNA secondary structures generated during DNA repair and recombination. Has endonuclease activity towards branched DNA substrates, introducing single-strand cuts in duplex DNA close to junctions with ss-DNA. In Scheffersomyces stipitis (strain ATCC 58785 / CBS 6054 / NBRC 10063 / NRRL Y-11545) (Yeast), this protein is Structure-specific endonuclease subunit SLX1.